A 640-amino-acid polypeptide reads, in one-letter code: 1,4-alpha-glucan branching enzyme GlgB (640 aa).

The Nucleophile role is filled by Asp-317. Glu-370 acts as the Proton donor in catalysis.

It belongs to the glycosyl hydrolase 13 family. GlgB subfamily. As to quaternary structure, monomer.

It carries out the reaction Transfers a segment of a (1-&gt;4)-alpha-D-glucan chain to a primary hydroxy group in a similar glucan chain.. It functions in the pathway glycan biosynthesis; glycogen biosynthesis. Its function is as follows. Catalyzes the formation of the alpha-1,6-glucosidic linkages in glycogen by scission of a 1,4-alpha-linked oligosaccharide from growing alpha-1,4-glucan chains and the subsequent attachment of the oligosaccharide to the alpha-1,6 position. The sequence is that of 1,4-alpha-glucan branching enzyme GlgB from Nitratidesulfovibrio vulgaris (strain DP4) (Desulfovibrio vulgaris).